Here is a 92-residue protein sequence, read N- to C-terminus: Transcription factor PRE5 (92 aa).

The region spanning 4–59 is the bHLH domain; sequence RRSRQTSNASRISDDQMIDLVSKLRQFLPEIHERRRSDKVSASKVLQETCNYIRKL.

This sequence belongs to the bHLH protein family. In terms of assembly, interacts with IBH1.

The protein localises to the nucleus. Atypical and probable non DNA-binding bHLH transcription factor that integrates multiple signaling pathways to regulate cell elongation and plant development. May have a regulatory role in various aspects of gibberellin-dependent growth and development. The polypeptide is Transcription factor PRE5 (PRE5) (Arabidopsis thaliana (Mouse-ear cress)).